Here is a 157-residue protein sequence, read N- to C-terminus: 2-C-methyl-D-erythritol 2,4-cyclodiphosphate synthase (157 aa).

Residues aspartate 9 and histidine 11 each contribute to the a divalent metal cation site. 4-CDP-2-C-methyl-D-erythritol 2-phosphate is bound by residues 9-11 (DVH) and 35-36 (HS). Histidine 43 serves as a coordination point for a divalent metal cation. Residues 57-59 (DIG), 62-66 (FPDTD), 101-107 (AEKPKMA), 133-136 (TTTE), phenylalanine 140, and arginine 143 each bind 4-CDP-2-C-methyl-D-erythritol 2-phosphate.

It belongs to the IspF family. As to quaternary structure, homotrimer. Requires a divalent metal cation as cofactor.

It carries out the reaction 4-CDP-2-C-methyl-D-erythritol 2-phosphate = 2-C-methyl-D-erythritol 2,4-cyclic diphosphate + CMP. The protein operates within isoprenoid biosynthesis; isopentenyl diphosphate biosynthesis via DXP pathway; isopentenyl diphosphate from 1-deoxy-D-xylulose 5-phosphate: step 4/6. Involved in the biosynthesis of isopentenyl diphosphate (IPP) and dimethylallyl diphosphate (DMAPP), two major building blocks of isoprenoid compounds. Catalyzes the conversion of 4-diphosphocytidyl-2-C-methyl-D-erythritol 2-phosphate (CDP-ME2P) to 2-C-methyl-D-erythritol 2,4-cyclodiphosphate (ME-CPP) with a corresponding release of cytidine 5-monophosphate (CMP). The chain is 2-C-methyl-D-erythritol 2,4-cyclodiphosphate synthase from Listeria monocytogenes serotype 4b (strain F2365).